The sequence spans 191 residues: Pyridoxal 5'-phosphate synthase subunit PdxT (191 aa).

Residue 48-50 (GES) participates in L-glutamine binding. Cysteine 81 functions as the Nucleophile in the catalytic mechanism. Residues arginine 109 and 136–137 (IR) contribute to the L-glutamine site. Active-site charge relay system residues include histidine 172 and glutamate 174.

This sequence belongs to the glutaminase PdxT/SNO family. As to quaternary structure, in the presence of PdxS, forms a dodecamer of heterodimers. Only shows activity in the heterodimer.

It carries out the reaction aldehydo-D-ribose 5-phosphate + D-glyceraldehyde 3-phosphate + L-glutamine = pyridoxal 5'-phosphate + L-glutamate + phosphate + 3 H2O + H(+). The enzyme catalyses L-glutamine + H2O = L-glutamate + NH4(+). It participates in cofactor biosynthesis; pyridoxal 5'-phosphate biosynthesis. Functionally, catalyzes the hydrolysis of glutamine to glutamate and ammonia as part of the biosynthesis of pyridoxal 5'-phosphate. The resulting ammonia molecule is channeled to the active site of PdxS. This chain is Pyridoxal 5'-phosphate synthase subunit PdxT, found in Thermus thermophilus (strain ATCC 27634 / DSM 579 / HB8).